The primary structure comprises 273 residues: Esterase pigG (273 aa).

Residues serine 122, aspartate 215, and histidine 243 each act as charge relay system in the active site.

This sequence belongs to the LovG family.

The protein operates within secondary metabolite biosynthesis. Esterase; part of the gene cluster that mediates the biosynthesis of azaphilone pigments (MonAzPs), a complex mixture of compounds with a common azaphilone skeleton very widely used as food colorants. Within the pathway, pigG may assist the nrPKS pigA in the biosynthesis of the hexaketide precursor. The first step of the pathway is performed by the nrPKS pigA that forms the hexaketide precursor from successive condensations of five malonyl-CoA units, with a simple acetyl-CoA starter unit. The role of esterase pigG is not clear, but it may play at most a supplementary role in the formation of the benzaldehyde produced by the pigA nrPKS. This very reactive benzaldehyde is intercepted by the pigC ketoreductase that to provide the first stable enzyme-free MonAzPs intermediate, 6-(4-hydroxy-2-oxopentyl)-3-methyl-2,4-dioxocyclohexane carbaldehyde, also known as M7PKS-1. The FAD-dependent monooxygenase pigN hydroxylates M7PKS-1 at C-4, which triggers the formation of the pyran ring. PigJ, pigK and pigD are involved in the acetylation of the pyran ring. PigJ and pigK form the two subunits of a dedicated fungal FAS that produces the side chain fatty acyl moiety of MonAzPs and pigD transfers the fatty acyl chain to the C-4 alcohol. PigM and pigO are involved in the elimination of the omega-1 alcohol. PigM acts as an O-acetyltransferase that synthesizes the putative O-11 acetyl intermediate whereas pigO eliminates acetic acid to yield an intermediate with a C10(11) double bond. The dehydration of the C-11 alcohol followed by the reduction of the C6(7) double bond by the NAD(P)H-dependent oxidoreductase pigE increases the electrophilicity of the C-5 ketone of the resulting acyl benzopyran. This in turn sets up the C-5 ketone for an intramolecular Knoevenagel aldol condensation with the C-20 enol of the side chain. This condensation affords the characteristic linear tricyclic carbon skeletons of the yellow pigments that serve as the common precursors for the classical yellow pigments monascin and ankaflavin, orange pigments rubopunctatin and monascorubrin, and red pigments ribropunctamine and monascorubramine. The FAD-dependent oxidoreductase pigF is especially invoved in the biosynthesis of orange and red pigments via desaturation of C6(7). The protein is Esterase pigG of Monascus ruber (Mold).